A 281-amino-acid polypeptide reads, in one-letter code: MTKYTNADELKSLTLGQKTEYKHTYEPELLQAVPRSLNRDDLALGDELPFVGCDVWTLYELSWLNQNGLPQVAVGEVALPATSPNLVESKSFKLYLNSFNQTKFTSWDEVKETLVKDLSACAGETVKVDVFPVQRYSQQPIVDMQGECIDDQDIIIDDYEFNAAYLESSTSDAEIEETLHSHLLKSNCLITNQPDWGSVEIQYKGKKIDREKLLRYLISFRQHNEFHEQCVERIYTDIMKYCAPESLTVFARYTRRGGLDINPFRSSHLLAPKDNLRLARQ.

87 to 89 (VES) serves as a coordination point for substrate. Residue 89-90 (SK) coordinates NADPH. The active-site Thioimide intermediate is the cysteine 188. Aspartate 195 serves as the catalytic Proton donor. Position 227–228 (227–228 (HE)) interacts with substrate. 256–257 (RG) is a binding site for NADPH.

Belongs to the GTP cyclohydrolase I family. QueF type 2 subfamily. As to quaternary structure, homodimer.

The protein resides in the cytoplasm. It catalyses the reaction 7-aminomethyl-7-carbaguanine + 2 NADP(+) = 7-cyano-7-deazaguanine + 2 NADPH + 3 H(+). It functions in the pathway tRNA modification; tRNA-queuosine biosynthesis. Functionally, catalyzes the NADPH-dependent reduction of 7-cyano-7-deazaguanine (preQ0) to 7-aminomethyl-7-deazaguanine (preQ1). The chain is NADPH-dependent 7-cyano-7-deazaguanine reductase from Aliivibrio fischeri (strain MJ11) (Vibrio fischeri).